A 790-amino-acid chain; its full sequence is IQ motif and ubiquitin-like domain-containing protein (790 aa).

The segment covering 1–17 (MSNQPKKYETQNIANST) has biased composition (polar residues). Residues 1–49 (MSNQPKKYETQNIANSTEESDAFDIVTIPVPSEEPQESDQTEEHESGIE) are disordered. The region spanning 130 to 206 (ATVKVVLIPV…IQVEIFSTNP (77 aa)) is the Ubiquitin-like domain. In terms of domain architecture, IQ spans 337-366 (RLKAVIVIQTYYRQWHAKIFVEDLRRQKSL).

Component of the axonemal radial spoke 1 (RS1) complex, at least composed of spoke head proteins RSPH1, RSPH3, RSPH9 and the cilia-specific component RSPH4A or sperm-specific component RSPH6A, spoke stalk proteins RSPH14, DNAJB13, DYDC1, ROPN1L and NME5, and the anchor protein IQUB. Does not appear to be part of radial spoke complexes 2 or 3 (RS2 or RS3). Interacts with CALM1. Interacts with DNAJB13. Interacts with DYNLL2. Interacts with NME5. Interacts with RSPH3. Interacts with RSPH9. Interacts with ZMYND10. Interacts with calmodulin; the interaction occurs in conditions of low but not high calcium.

The protein resides in the cytoplasm. Its subcellular location is the cytoskeleton. It localises to the flagellum axoneme. It is found in the cell projection. The protein localises to the cilium. Functionally, adapter protein that anchors the radial spoke 1 (RS1) complex to the A microtubule of outer doublet microtubules in axonemes. The triple radial spokes (RS1, RS2 and RS3) are required to modulate beating of the sperm flagellum. May play a role in inhibiting signaling via MAPK1/ERK2 and MAPK3/ERK1. Additionally, may play a role in the functioning of cilia. Not required for the functioning of tracheal or ependymal cilia. This is IQ motif and ubiquitin-like domain-containing protein (IQUB) from Macaca fascicularis (Crab-eating macaque).